Here is a 71-residue protein sequence, read N- to C-terminus: Protein CYSTEINE-RICH TRANSMEMBRANE MODULE 6 (71 aa).

Polar residues predominate over residues Met1–Ala12. The disordered stretch occupies residues Met1 to Thr36. Pro residues predominate over residues Pro14–Gly30. A helical transmembrane segment spans residues Ser48–Cys64.

The protein belongs to the CYSTM1 family. Homodimer and heterodimers. Interacts with CYSTM7 and WIH1/CYSTM13. In terms of tissue distribution, mostly expressed in roots, stems, rosette leaves and siliques and, to a lower extent, in flowers and cauline leaves.

The protein localises to the cell membrane. It localises to the cytoplasm. Its function is as follows. Involved in resistance to abiotic stress. The chain is Protein CYSTEINE-RICH TRANSMEMBRANE MODULE 6 from Arabidopsis thaliana (Mouse-ear cress).